Here is a 566-residue protein sequence, read N- to C-terminus: Liver carboxylesterase 1 (566 aa).

An N-terminal signal peptide occupies residues 1-18 (MWLRALVLATLAAFTAWG). The N-linked (GlcNAc...) asparagine glycan is linked to Asn79. A disulfide bond links Cys87 and Cys116. Catalysis depends on Ser221, which acts as the Acyl-ester intermediate. A disulfide bridge connects residues Cys274 and Cys285. Glu354 serves as the catalytic Charge relay system. Residue Ser379 is modified to Phosphoserine. The active-site Charge relay system is the His467.

This sequence belongs to the type-B carboxylesterase/lipase family. In terms of assembly, homotrimer and homohexamer. Binds to beta-glucuronidase.

The protein resides in the endoplasmic reticulum lumen. It localises to the cytoplasm. Its subcellular location is the lipid droplet. It catalyses the reaction a carboxylic ester + H2O = an alcohol + a carboxylate + H(+). The enzyme catalyses cholesteryl (9Z-octadecenoate) + H2O = cholesterol + (9Z)-octadecenoate + H(+). It carries out the reaction 2-(5Z,8Z,11Z,14Z-eicosatetraenoyl)-glycerol + H2O = glycerol + (5Z,8Z,11Z,14Z)-eicosatetraenoate + H(+). The catalysed reaction is prostaglandin E2 1-glyceryl ester + H2O = prostaglandin E2 + glycerol + H(+). It catalyses the reaction a cholesterol ester + H2O = cholesterol + a fatty acid + H(+). The enzyme catalyses prostaglandin F2alpha 1-glyceryl ester + H2O = prostaglandin F2alpha + glycerol + H(+). Involved in the detoxification of xenobiotics and in the activation of ester and amide prodrugs. Hydrolyzes aromatic and aliphatic esters, but has no catalytic activity toward amides or a fatty acyl-CoA ester. Displays fatty acid ethyl ester synthase activity, catalyzing the ethyl esterification of oleic acid to ethyloleate. Converts monoacylglycerides to free fatty acids and glycerol. Hydrolyzes of 2-arachidonoylglycerol and prostaglandins. Hydrolyzes cellular cholesteryl esters to free cholesterols and promotes reverse cholesterol transport (RCT) by facilitating both the initial and final steps in the process. First of all, allows free cholesterol efflux from macrophages to extracellular cholesterol acceptors and secondly, releases free cholesterol from lipoprotein-delivered cholesteryl esters in the liver for bile acid synthesis or direct secretion into the bile. The polypeptide is Liver carboxylesterase 1 (Macaca fascicularis (Crab-eating macaque)).